Consider the following 26-residue polypeptide: Potassium channel toxin alpha-KTx6 OcyKTx1 (26 aa).

Cys-3 and Cys-24 form a disulfide bridge.

Belongs to the short scorpion toxin superfamily. Potassium channel inhibitor family. Alpha-KTx 06 subfamily. Expressed by the venom gland.

Its subcellular location is the secreted. In terms of biological role, blocks voltage-gated potassium channels. The polypeptide is Potassium channel toxin alpha-KTx6 OcyKTx1 (Opisthacanthus cayaporum (South American scorpion)).